Reading from the N-terminus, the 205-residue chain is Protein Nef (205 aa).

A lipid anchor (N-myristoyl glycine; by host) is attached at Gly2. At Ser6 the chain carries Phosphoserine; by host. Residues 62–65 (DNEE) form an acidic; interacts with host PACS1 and PACS2; stabilizes the interaction of NEF/MHC-I with host AP1M1; necessary for MHC-I internalization region. The interval 69–78 (PVRPQVPTRP) is SH3-binding; interaction with Src family tyrosine kinases. The PxxP; stabilizes the interaction of NEF/MHC-I with host AP1M1; necessary for MHC-I internalization motif lies at 72-75 (PQVP). The segment at 108 to 124 (EILDLWVYHTQGFFPDW) is mediates dimerization, Nef-PTE1 interaction. A binding to ATP6V1H region spans residues 148 to 180 (LTEEQVEQANEGDNNCLLHPICQHGMEDEDKEV). The Dileucine internalization motif; necessary for CD4 internalization signature appears at 164 to 165 (LL). A Diacidic; necessary for CD4 internalization motif is present at residues 174 to 175 (ED).

It belongs to the lentivirus primate group Nef protein family. In terms of assembly, monomer; cytosolic form. Homodimer; membrane bound form. Interacts with Nef associated p21-activated kinase (PAK2); this interaction activates PAK2. Associates with the Nef-MHC-I-AP1 complex; this complex is required for MHC-I internalization. Interacts (via C-terminus) with host PI3-kinase. Interacts with host PACS1; this interaction seems to be weak. Interacts with host PACS2. Interacts with host LCK and MAPK3; these interactions inhibit the kinase activity of the latter. Interacts with host ATP6V1H; this interaction may play a role in CD4 endocytosis. Associates with the CD4-Nef-AP2 complex; this complex is required for CD4 internalization. Interacts with host AP2 subunit alpha and AP2 subunit sigma2. Interacts with TCR-zeta chain; this interaction up-regulates the Fas ligand (FasL) surface expression. Interacts with host HCK, LYN, and SRC; these interactions activate the Src family kinases. Interacts with MAP3K5; this interaction inhibits the Fas and TNFR-mediated death signals. Interacts with beta-COP and PTE1. Interacts with human RACK1; this increases Nef phosphorylation by PKC. Interacts with TP53; this interaction decreases the half-life of TP53, protecting the infected cell against p53-mediated apoptosis. Post-translationally, the virion-associated Nef proteins are cleaved by the viral protease to release the soluble C-terminal core protein. Nef is probably cleaved concomitantly with viral structural proteins on maturation of virus particles. In terms of processing, myristoylated. Phosphorylated on serine residues, probably by host PKCdelta and theta.

Its subcellular location is the host cell membrane. The protein localises to the virion. The protein resides in the secreted. It localises to the host Golgi apparatus membrane. Functionally, factor of infectivity and pathogenicity, required for optimal virus replication. Alters numerous pathways of T-lymphocyte function and down-regulates immunity surface molecules in order to evade host defense and increase viral infectivity. Alters the functionality of other immunity cells, like dendritic cells, monocytes/macrophages and NK cells. In terms of biological role, in infected CD4(+) T-lymphocytes, down-regulates the surface MHC-I, mature MHC-II, CD4, CD28, CCR5 and CXCR4 molecules. Mediates internalization and degradation of host CD4 through the interaction of with the cytoplasmic tail of CD4, the recruitment of AP-2 (clathrin adapter protein complex 2), internalization through clathrin coated pits, and subsequent transport to endosomes and lysosomes for degradation. Diverts host MHC-I molecules to the trans-Golgi network-associated endosomal compartments by an endocytic pathway to finally target them for degradation. MHC-I down-regulation may involve AP-1 (clathrin adapter protein complex 1) or possibly Src family kinase-ZAP70/Syk-PI3K cascade recruited by PACS2. In consequence infected cells are masked for immune recognition by cytotoxic T-lymphocytes. Decreasing the number of immune receptors also prevents reinfection by more HIV particles (superinfection). Down-regulates host SERINC3 and SERINC5 thereby excluding these proteins from the viral particles. Virion infectivity is drastically higher when SERINC3 or SERINC5 are excluded from the viral envelope, because these host antiviral proteins impair the membrane fusion event necessary for subsequent virion penetration. Its function is as follows. Bypasses host T-cell signaling by inducing a transcriptional program nearly identical to that of anti-CD3 cell activation. Interaction with TCR-zeta chain up-regulates the Fas ligand (FasL). Increasing surface FasL molecules and decreasing surface MHC-I molecules on infected CD4(+) cells send attacking cytotoxic CD8+ T-lymphocytes into apoptosis. Plays a role in optimizing the host cell environment for viral replication without causing cell death by apoptosis. Protects the infected cells from apoptosis in order to keep them alive until the next virus generation is ready to strike. Inhibits the Fas and TNFR-mediated death signals by blocking MAP3K5/ASK1. Decreases the half-life of TP53, protecting the infected cell against p53-mediated apoptosis. Inhibits the apoptotic signals regulated by the Bcl-2 family proteins through the formation of a Nef/PI3-kinase/PAK2 complex that leads to activation of PAK2 and induces phosphorylation of host BAD. Functionally, extracellular Nef protein targets CD4(+) T-lymphocytes for apoptosis by interacting with CXCR4 surface receptors. The protein is Protein Nef of Simian immunodeficiency virus (isolate CPZ GAB1) (SIV-cpz).